The primary structure comprises 457 residues: Tubulin beta chain (457 aa).

GTP is bound by residues Gln11, Glu69, Ser138, Gly142, Thr143, Gly144, Asn204, and Asn226. Mg(2+) is bound at residue Glu69. Phosphoserine occurs at positions 278 and 280. Residues 423–457 are disordered; that stretch reads QQYQEATVEDDEEVDENGDFGAPQNQDEPITENFE. Over residues 429 to 440 the composition is skewed to acidic residues; the sequence is TVEDDEEVDENG.

The protein belongs to the tubulin family. As to quaternary structure, dimer of alpha and beta chains. A typical microtubule is a hollow water-filled tube with an outer diameter of 25 nm and an inner diameter of 15 nM. Alpha-beta heterodimers associate head-to-tail to form protofilaments running lengthwise along the microtubule wall with the beta-tubulin subunit facing the microtubule plus end conferring a structural polarity. Microtubules usually have 13 protofilaments but different protofilament numbers can be found in some organisms and specialized cells. It depends on Mg(2+) as a cofactor.

It is found in the cytoplasm. It localises to the cytoskeleton. Its function is as follows. Tubulin is the major constituent of microtubules, a cylinder consisting of laterally associated linear protofilaments composed of alpha- and beta-tubulin heterodimers. Microtubules grow by the addition of GTP-tubulin dimers to the microtubule end, where a stabilizing cap forms. Below the cap, tubulin dimers are in GDP-bound state, owing to GTPase activity of alpha-tubulin. The sequence is that of Tubulin beta chain (TUB2) from Saccharomyces cerevisiae (strain ATCC 204508 / S288c) (Baker's yeast).